Reading from the N-terminus, the 532-residue chain is Intercellular adhesion molecule 1 (532 aa).

The N-terminal stretch at 1-27 (MAPSSPRPALPALLVLLGALFPGPGNA) is a signal peptide. The Extracellular portion of the chain corresponds to 28-480 (QTSVSPPKVI…TVNVLSPRYE (453 aa)). Ig-like C2-type domains lie at 41-103 (GGSV…QSTA) and 128-193 (GKDL…LDLR). 3 cysteine pairs are disulfide-bonded: cysteine 48–cysteine 92, cysteine 52–cysteine 96, and cysteine 135–cysteine 186. Residue asparagine 145 is glycosylated (N-linked (GlcNAc...) asparagine). Positions 152 to 154 (RGE) match the Cell attachment site; atypical motif. Residues asparagine 183, asparagine 202, asparagine 267, and asparagine 296 are each glycosylated (N-linked (GlcNAc...) asparagine). 2 consecutive Ig-like C2-type domains span residues 230-297 (DTQG…LGNQ) and 325-378 (GTEV…LEVA). A disulfide bond links cysteine 237 and cysteine 290. A disulfide bridge connects residues cysteine 332 and cysteine 371. Asparagine 385 and asparagine 406 each carry an N-linked (GlcNAc...) asparagine glycan. 3 disulfide bridges follow: cysteine 403–cysteine 419, cysteine 419–cysteine 457, and cysteine 431–cysteine 457. Positions 412 to 464 (NSQQTPMCQASGNPLPELKCLKDGTFPLPVGESVTVTRDLEGTYLCRARSTQG) constitute an Ig-like C2-type 5 domain. The helical transmembrane segment at 481 to 503 (IVIITVVAAAVIMGTAGLSTYLY) threads the bilayer. At 504 to 532 (NRQRKIRKYRLQQAQKGTPMKPNTQATPP) the chain is on the cytoplasmic side. Threonine 521 and threonine 530 each carry phosphothreonine.

The protein belongs to the immunoglobulin superfamily. ICAM family. As to quaternary structure, homodimer. Interacts with MUC1 and promotes cell aggregation in epithelial cells. Interacts with ARHGEF26/SGEF. Interacts (on T cell side) with CD81, CD247 and CD9 at immunological synapses between antigen-presenting cells and T cells. Post-translationally, monoubiquitinated, which is promoted by MARCH9 and leads to endocytosis.

It localises to the membrane. In terms of biological role, ICAM proteins are ligands for the leukocyte adhesion protein LFA-1 (integrin alpha-L/beta-2). During leukocyte trans-endothelial migration, ICAM1 engagement promotes the assembly of endothelial apical cups through ARHGEF26/SGEF and RHOG activation. This Pan troglodytes (Chimpanzee) protein is Intercellular adhesion molecule 1 (ICAM1).